A 200-amino-acid chain; its full sequence is Shikimate kinase (200 aa).

41–46 (GVGKSS) contacts ATP. Serine 45 is a Mg(2+) binding site. Aspartate 63, arginine 87, and glycine 109 together coordinate substrate. Arginine 147 is a binding site for ATP. Arginine 166 provides a ligand contact to substrate.

It belongs to the shikimate kinase family. Monomer. It depends on Mg(2+) as a cofactor.

It is found in the cytoplasm. It catalyses the reaction shikimate + ATP = 3-phosphoshikimate + ADP + H(+). The protein operates within metabolic intermediate biosynthesis; chorismate biosynthesis; chorismate from D-erythrose 4-phosphate and phosphoenolpyruvate: step 5/7. Functionally, catalyzes the specific phosphorylation of the 3-hydroxyl group of shikimic acid using ATP as a cosubstrate. This chain is Shikimate kinase, found in Caulobacter vibrioides (strain NA1000 / CB15N) (Caulobacter crescentus).